Here is a 603-residue protein sequence, read N- to C-terminus: Podocalyxin-like protein 2 (603 aa).

An N-terminal signal peptide occupies residues 1–28; it reads MARPLRAARLPPPLLLLLAAGASLGAYA. Residues 29 to 499 lie on the Extracellular side of the membrane; sequence VGVDEPGPEG…ATQVRSDYGT (471 aa). The segment at 53–92 is disordered; that stretch reads FEPLDSEEPSEAMGLDAGLAPGSGFPSEDSEESRLLQPPQ. Ser-75 carries an O-linked (Xyl...) (chondroitin sulfate) serine glycan. Position 93 is a sulfotyrosine (Tyr-93). A glycan (N-linked (GlcNAc...) asparagine) is linked at Asn-101. Sulfotyrosine is present on Tyr-113. The segment at 124-368 is disordered; the sequence is SMEDPGQAPD…LEGQAAEAHS (245 aa). A compositionally biased stretch (acidic residues) spans 156–187; that stretch reads QEEEEEEEEEEEEREEEEREKEAEEEEEEEEL. Low complexity predominate over residues 196-216; the sequence is ATAQAHAPSPSTSSSTSSQSP. 3 stretches are compositionally biased toward polar residues: residues 240–266, 302–314, and 339–349; these read VKPT…QESG, ALPS…TVPP, and DTESTPSSATW. N-linked (GlcNAc...) asparagine glycosylation is present at Asn-260. N-linked (GlcNAc...) asparagine glycosylation is present at Asn-394. Residues 500–520 traverse the membrane as a helical segment; the sequence is LFVVLVIIGVICFIIIVLGLL. The Cytoplasmic portion of the chain corresponds to 521 to 603; the sequence is YNCWQRRMPK…SDVFEEDTHL (83 aa). The segment covering 558–570 has biased composition (polar residues); sequence DSQSEMQEKQPSL. The disordered stretch occupies residues 558–603; sequence DSQSEMQEKQPSLNGGAINGPSSWSALMGSKRDPEDSDVFEEDTHL. A phosphoserine mark is found at Ser-569 and Ser-594. Acidic residues predominate over residues 592–603; it reads EDSDVFEEDTHL.

The protein belongs to the podocalyxin family. As to quaternary structure, homodimer; disulfide-linked. Interacts with SELL, SELE and SELP. In terms of processing, glycosylated; contains chondroitin sulfate. Displays sialylated O-linked oligosaccharides. Sulfation is necessary for interaction with SELL. Sialylated O-linked oligosaccharides are necessary for interaction with SELL, SELE and SELP.

The protein localises to the membrane. Functionally, acts as a ligand for vascular selectins. Mediates rapid rolling of leukocytes over vascular surfaces through high affinity divalent cation-dependent interactions with E-, P- and L-selectins. The polypeptide is Podocalyxin-like protein 2 (Podxl2) (Mus musculus (Mouse)).